Here is a 185-residue protein sequence, read N- to C-terminus: Adenine phosphoribosyltransferase (185 aa).

Belongs to the purine/pyrimidine phosphoribosyltransferase family. Homodimer.

The protein localises to the cytoplasm. The enzyme catalyses AMP + diphosphate = 5-phospho-alpha-D-ribose 1-diphosphate + adenine. Its pathway is purine metabolism; AMP biosynthesis via salvage pathway; AMP from adenine: step 1/1. Its function is as follows. Catalyzes a salvage reaction resulting in the formation of AMP, that is energically less costly than de novo synthesis. The polypeptide is Adenine phosphoribosyltransferase (Shewanella denitrificans (strain OS217 / ATCC BAA-1090 / DSM 15013)).